Here is a 232-residue protein sequence, read N- to C-terminus: 7-cyano-7-deazaguanine synthase (232 aa).

8–18 is a binding site for ATP; sequence FSGGQDSTTCL. 4 residues coordinate Zn(2+): cysteine 187, cysteine 196, cysteine 199, and cysteine 202.

It belongs to the QueC family. Zn(2+) is required as a cofactor.

It carries out the reaction 7-carboxy-7-deazaguanine + NH4(+) + ATP = 7-cyano-7-deazaguanine + ADP + phosphate + H2O + H(+). It functions in the pathway purine metabolism; 7-cyano-7-deazaguanine biosynthesis. In terms of biological role, catalyzes the ATP-dependent conversion of 7-carboxy-7-deazaguanine (CDG) to 7-cyano-7-deazaguanine (preQ(0)). The chain is 7-cyano-7-deazaguanine synthase from Vibrio parahaemolyticus serotype O3:K6 (strain RIMD 2210633).